Reading from the N-terminus, the 434-residue chain is MQTTQETQGALERRIDMSVPMAEIDKEVDSRLKRMARTVKMPGFRPGKVPMKIVAQTYGSQARSEAIGAAVEKAFGDKVREQNLRVAGYPRIEPREAAVEGALEFSAVFEVYPQVPLGDLSGQKVERPVLTVGDAEVDKTIEVLRKQRTTFEAVDRPAQDGDRVVIDFAGRKDGELFEGGKAQDFPFVIGAGSMLKDFESAVGGLKVGETKTFEMTFPEDYHAADLAGQKVEFEITVKGVEAPILPAVDADLARALGVADGDVTKLRDEVRANLEREVKRRIQGKVKEQVMEALLVANPIEVPKALVEAESRQLAENAKRDLEMRGMNTKDIPVEPTWFADQAVRRVKLGLIMAELVNAKELYAKPEQVRAMIDEMAQSYEDPAELVRWYYAQPERLGQAEAVVIEDNVVAWVLSQTQTEDKTVTFDELMGNAA.

A PPIase FKBP-type domain is found at 161 to 246 (GDRVVIDFAG…VKGVEAPILP (86 aa)).

It belongs to the FKBP-type PPIase family. Tig subfamily.

Its subcellular location is the cytoplasm. It carries out the reaction [protein]-peptidylproline (omega=180) = [protein]-peptidylproline (omega=0). Functionally, involved in protein export. Acts as a chaperone by maintaining the newly synthesized protein in an open conformation. Functions as a peptidyl-prolyl cis-trans isomerase. This chain is Trigger factor, found in Aromatoleum aromaticum (strain DSM 19018 / LMG 30748 / EbN1) (Azoarcus sp. (strain EbN1)).